Reading from the N-terminus, the 436-residue chain is GTPase Der (436 aa).

EngA-type G domains lie at 4–167 and 176–351; these read PVVA…PKEE and VKFS…DNHS. Residues 10–17, 57–61, 119–122, 182–189, 229–233, and 294–297 contribute to the GTP site; these read GRPNVGKS, DTGGI, NKVD, DTAGM, and NKWD. One can recognise a KH-like domain in the interval 352-436; that stretch reads LRVQSSMLND…PIRVIARKRK (85 aa).

It belongs to the TRAFAC class TrmE-Era-EngA-EngB-Septin-like GTPase superfamily. EngA (Der) GTPase family. Associates with the 50S ribosomal subunit.

In terms of biological role, GTPase that plays an essential role in the late steps of ribosome biogenesis. The sequence is that of GTPase Der from Listeria monocytogenes serotype 4b (strain F2365).